A 435-amino-acid polypeptide reads, in one-letter code: GTPase Der (435 aa).

EngA-type G domains are found at residues 4 to 167 (PIVA…SPDA) and 175 to 350 (ISFS…ENKN). GTP is bound by residues 10 to 17 (GQPNVGKS), 57 to 61 (DTGGI), 119 to 122 (NKAD), 181 to 188 (GRPNVGKS), 228 to 232 (DTAGI), and 293 to 296 (NKWD). In terms of domain architecture, KH-like spans 351–435 (QRIQSSVLND…PIKILPRKRK (85 aa)).

It belongs to the TRAFAC class TrmE-Era-EngA-EngB-Septin-like GTPase superfamily. EngA (Der) GTPase family. Associates with the 50S ribosomal subunit.

Its function is as follows. GTPase that plays an essential role in the late steps of ribosome biogenesis. This is GTPase Der from Lactobacillus delbrueckii subsp. bulgaricus (strain ATCC 11842 / DSM 20081 / BCRC 10696 / JCM 1002 / NBRC 13953 / NCIMB 11778 / NCTC 12712 / WDCM 00102 / Lb 14).